The following is a 388-amino-acid chain: Methylthioribose-1-phosphate isomerase (388 aa).

Residue aspartate 258 is the Proton donor of the active site.

This sequence belongs to the eIF-2B alpha/beta/delta subunits family. MtnA subfamily.

The protein localises to the cytoplasm. It is found in the nucleus. It carries out the reaction 5-(methylsulfanyl)-alpha-D-ribose 1-phosphate = 5-(methylsulfanyl)-D-ribulose 1-phosphate. It functions in the pathway amino-acid biosynthesis; L-methionine biosynthesis via salvage pathway; L-methionine from S-methyl-5-thio-alpha-D-ribose 1-phosphate: step 1/6. Catalyzes the interconversion of methylthioribose-1-phosphate (MTR-1-P) into methylthioribulose-1-phosphate (MTRu-1-P). The protein is Methylthioribose-1-phosphate isomerase of Sordaria macrospora (strain ATCC MYA-333 / DSM 997 / K(L3346) / K-hell).